Consider the following 208-residue polypeptide: Mediator of RNA polymerase II transcription subunit 18 (208 aa).

Serine 66 bears the Phosphoserine mark.

It belongs to the Mediator complex subunit 18 family. In terms of assembly, component of the Mediator complex, which is composed of MED1, MED4, MED6, MED7, MED8, MED9, MED10, MED11, MED12, MED13, MED13L, MED14, MED15, MED16, MED17, MED18, MED19, MED20, MED21, MED22, MED23, MED24, MED25, MED26, MED27, MED29, MED30, MED31, CCNC, CDK8 and CDC2L6/CDK11. The MED12, MED13, CCNC and CDK8 subunits form a distinct module termed the CDK8 module. Mediator containing the CDK8 module is less active than Mediator lacking this module in supporting transcriptional activation. Individual preparations of the Mediator complex lacking one or more distinct subunits have been variously termed ARC, CRSP, DRIP, PC2, SMCC and TRAP.

The protein localises to the nucleus. In terms of biological role, component of the Mediator complex, a coactivator involved in the regulated transcription of nearly all RNA polymerase II-dependent genes. Mediator functions as a bridge to convey information from gene-specific regulatory proteins to the basal RNA polymerase II transcription machinery. Mediator is recruited to promoters by direct interactions with regulatory proteins and serves as a scaffold for the assembly of a functional preinitiation complex with RNA polymerase II and the general transcription factors. The sequence is that of Mediator of RNA polymerase II transcription subunit 18 (MED18) from Bos taurus (Bovine).